We begin with the raw amino-acid sequence, 361 residues long: Molybdenum import ATP-binding protein ModC (361 aa).

In terms of domain architecture, ABC transporter spans 1 to 228 (MLTINIEKQL…EQMRPWVPLQ (228 aa)). 31–38 (GRSGAGKT) provides a ligand contact to ATP. A Mop domain is found at 289–356 (RSSIRNVLKG…IKGVTMTQMD (68 aa)).

Belongs to the ABC transporter superfamily. Molybdate importer (TC 3.A.1.8) family. In terms of assembly, the complex is composed of two ATP-binding proteins (ModC), two transmembrane proteins (ModB) and a solute-binding protein (ModA).

The protein localises to the cell inner membrane. It catalyses the reaction molybdate(out) + ATP + H2O = molybdate(in) + ADP + phosphate + H(+). In terms of biological role, part of the ABC transporter complex ModABC involved in molybdenum import. Responsible for energy coupling to the transport system. The chain is Molybdenum import ATP-binding protein ModC from Shewanella oneidensis (strain ATCC 700550 / JCM 31522 / CIP 106686 / LMG 19005 / NCIMB 14063 / MR-1).